A 302-amino-acid polypeptide reads, in one-letter code: Pathogenicity locus probable regulatory protein HrpS (302 aa).

One can recognise a Sigma-54 factor interaction domain in the interval 9–237; it reads DDLDEERVPN…LKAAAKRHVL (229 aa). ATP is bound by residues 37-44 and 99-108; these read GETGTGKD and AQGGTLYLDE. Positions 279 to 298 form a DNA-binding region, H-T-H motif; the sequence is IDAASLELDMPRRTLYRRIK.

Functionally, member of the two-component regulatory system HrpR/HrpS that regulates the activation of the sigma factor hrpL which itself induces the expression of hprD as well as other hrp loci which are involved in plant pathogenicity, hrmA and avr genes. Probably interacts with sigma-54. This Pseudomonas savastanoi pv. phaseolicola (Pseudomonas syringae pv. phaseolicola) protein is Pathogenicity locus probable regulatory protein HrpS (hrpS).